Consider the following 288-residue polypeptide: MRGIILAGGSGTRLYPITMGISKQLLPVYDKPMIYYPLTTLMMAGIRDIQLITTPHDAPGFHRLLGDGAHLGVNISYATQDQPDGLAQAFVIGANHIGADSVALVLGDNIFYGPGLGTSLKRFQSISGGAIFAYWVANPSAYGVVEFGAEGMALSLEEKPVTPKSNYAVPGLYFYDNDVIEIARGLKKSARGEYEITEVNQVYLNQGRLAVEVLARGTAWLDTGTFDSLLDAADFVRTLERRQGLKVSIPEEVAWRMGWIDDEQLVQRARALVKSGYGNYLLELLERN.

Position 8 (G8) interacts with dTDP-alpha-D-glucose. Residues G8, G11, T12, R13, K23, Q24, Q80, G85, and D108 each contribute to the dTTP site. Positions 23, 24, 80, 85, 108, 109, 143, 158, 159, 169, and 222 each coordinate dTDP-alpha-D-glucose. A Mg(2+)-binding site is contributed by D108. Position 222 (D222) interacts with Mg(2+).

It belongs to the glucose-1-phosphate thymidylyltransferase family. It depends on Mg(2+) as a cofactor.

The enzyme catalyses dTTP + alpha-D-glucose 1-phosphate + H(+) = dTDP-alpha-D-glucose + diphosphate. Its pathway is carbohydrate biosynthesis; dTDP-L-rhamnose biosynthesis. Functionally, catalyzes the conversion of glucose-1-phosphate and dTTP to dTDP-glucose and pyrophosphate. Involved in the biosynthesis of the dTDP-L-rhamnose which is a component of the critical linker, D-N-acetylglucosamine-L-rhamnose disaccharide, which connects the galactan region of arabinogalactan to peptidoglycan via a phosphodiester linkage. The sequence is that of Glucose-1-phosphate thymidylyltransferase (rmlA) from Mycobacterium tuberculosis (strain CDC 1551 / Oshkosh).